The primary structure comprises 700 residues: Polyribonucleotide nucleotidyltransferase (700 aa).

The Mg(2+) site is built by D485 and D491. Residues 552-611 enclose the KH domain; the sequence is PRITVIKINPEKIRDVIGKGGAVIRALTEETGTTIELEDDGTVKIASSNGEATKEAIRRI. The S1 motif domain maps to 621–689; that stretch reads GRIYNGKVIR…RQGRVRLSIK (69 aa).

The protein belongs to the polyribonucleotide nucleotidyltransferase family. In terms of assembly, component of the RNA degradosome, which is a multiprotein complex involved in RNA processing and mRNA degradation. Mg(2+) serves as cofactor.

It is found in the cytoplasm. It carries out the reaction RNA(n+1) + phosphate = RNA(n) + a ribonucleoside 5'-diphosphate. Its function is as follows. Involved in mRNA degradation. Catalyzes the phosphorolysis of single-stranded polyribonucleotides processively in the 3'- to 5'-direction. This Shewanella baltica (strain OS185) protein is Polyribonucleotide nucleotidyltransferase.